The primary structure comprises 360 residues: MAAERGAGQQQSQEMMEVDRRVESEESGDEEGKKHSSGIVADLSEQSLKDGEERGEEDPEEEHELPVDMETINLDRDAEDVDLNHYRIGKIEGFEVLKKVKTLCLRQNLIKCIENLEELQSLRELDLYDNQIKKIENLEALTELEILDISFNLLRNIEGVDKVTQLKKLFLVNNKISKIENLSNLHQLQMLELGSNRIRAIENIDTLTNLESLFLGKNKITKLQNLDALTNLTVLSMQSNRLTKIEGLQNLVNLQELYLSHNGIEVIEGLENNNKLTMLDIASNRIKKIENISHLTEPQEFWMNDNLLESWSDLDELKGARSLETVYLERNPLQKDPQYRRKVMLALPSVRQIDATFVRF.

The interval 1–64 is disordered; it reads MAAERGAGQQ…GEEDPEEEHE (64 aa). Residue Ala-2 is modified to N-acetylalanine. Phosphoserine occurs at positions 12, 24, 27, 44, and 47. Positions 17 to 34 are enriched in basic and acidic residues; the sequence is EVDRRVESEESGDEEGKK. Acidic residues predominate over residues 53–63; the sequence is ERGEEDPEEEH. 11 LRR repeats span residues 77-98, 99-120, 121-142, 143-164, 165-186, 187-208, 209-230, 231-252, 253-274, 275-296, and 297-318; these read DAEDVDLNHYRIGKIEGFEVLK, KVKTLCLRQNLIKCIENLEELQ, SLRELDLYDNQIKKIENLEALT, ELEILDISFNLLRNIEGVDKVT, QLKKLFLVNNKISKIENLSNLH, QLQMLELGSNRIRAIENIDTLT, NLESLFLGKNKITKLQNLDALT, NLTVLSMQSNRLTKIEGLQNLV, NLQELYLSHNGIEVIEGLENNN, KLTMLDIASNRIKKIENISHLT, and EPQEFWMNDNLLESWSDLDELK. At Ser-322 the chain carries Phosphoserine. The 30-residue stretch at 331–360 folds into the LRRCT domain; sequence NPLQKDPQYRRKVMLALPSVRQIDATFVRF.

Belongs to the SDS22 family. As to quaternary structure, interacts with PPP1CA, PPP1CB and PPP1CC/PPP1G.

Its subcellular location is the nucleus. In terms of biological role, regulatory subunit of protein phosphatase 1. This Pongo abelii (Sumatran orangutan) protein is Protein phosphatase 1 regulatory subunit 7 (PPP1R7).